Consider the following 89-residue polypeptide: ATP synthase subunit H, mitochondrial (89 aa).

F-type ATP synthases have 2 components, the catalytic core F(1) and the membrane-embedded component F(0), linked together by a central stalk and a peripheral stalk. The central stalk, also called rotor shaft, is often seen as part of F(1). The peripheral stalk is seen as part of F(0). F(0) contains the membrane channel next to the rotor. F-type ATP synthases form dimers but each monomer functions independently in ATP generation. The dimer consists of 18 different polypeptides: ATP1 (subunit alpha, part of F(1), 3 molecules per monomer), ATP2 (subunit beta, part of F(1), 3 molecules per monomer), ATP3 (subunit gamma, part of the central stalk), ATP4 (subunit b, part of the peripheral stalk), ATP5/OSCP (subunit 5/OSCP, part of the peripheral stalk), ATP6 (subunit a, part of the peripheral stalk), ATP7 (subunit d, part of the peripheral stalk), ATP8 (subunit 8, part of the peripheral stalk), OLI1 (subunit c, part of the rotor, 10 molecules per monomer), ATP14 (subunit H, part of the peripheral stalk), ATP15 (subunit epsilon, part of the central stalk), ATP16 (subunit delta, part of the central stalk), ATP17 (subunit f, part of the peripheral stalk), ATP18 (subunit i/j, part of the peripheral stalk). Dimer-specific subunits are ATP19 (subunit k, at interface between monomers), ATP20 (subunit g, at interface between monomers), TIM11 (subunit e, at interface between monomers). Also contains subunit L.

It localises to the mitochondrion inner membrane. Functionally, mitochondrial membrane ATP synthase (F(1)F(0) ATP synthase or Complex V) produces ATP from ADP in the presence of a proton gradient across the membrane which is generated by electron transport complexes of the respiratory chain. F-type ATP synthases consist of two structural domains, F(1) - containing the extramembraneous catalytic core, and F(0) - containing the membrane proton channel, linked together by a central stalk and a peripheral stalk. During catalysis, ATP synthesis in the catalytic domain of F(1) is coupled via a rotary mechanism of the central stalk subunits to proton translocation. Part of the peripheral stalk. The chain is ATP synthase subunit H, mitochondrial from Pichia angusta (Yeast).